The chain runs to 218 residues: Peptide methionine sulfoxide reductase MsrA (218 aa).

Residue C57 is part of the active site.

It belongs to the MsrA Met sulfoxide reductase family.

The enzyme catalyses L-methionyl-[protein] + [thioredoxin]-disulfide + H2O = L-methionyl-(S)-S-oxide-[protein] + [thioredoxin]-dithiol. The catalysed reaction is [thioredoxin]-disulfide + L-methionine + H2O = L-methionine (S)-S-oxide + [thioredoxin]-dithiol. Has an important function as a repair enzyme for proteins that have been inactivated by oxidation. Catalyzes the reversible oxidation-reduction of methionine sulfoxide in proteins to methionine. The sequence is that of Peptide methionine sulfoxide reductase MsrA from Brucella anthropi (Ochrobactrum anthropi).